The primary structure comprises 232 residues: Methylthioribulose-1-phosphate dehydratase (232 aa).

C91 contributes to the substrate binding site. The Zn(2+) site is built by H109, H111, and H191.

Belongs to the aldolase class II family. MtnB subfamily. Requires Zn(2+) as cofactor.

It localises to the cytoplasm. The catalysed reaction is 5-(methylsulfanyl)-D-ribulose 1-phosphate = 5-methylsulfanyl-2,3-dioxopentyl phosphate + H2O. Its pathway is amino-acid biosynthesis; L-methionine biosynthesis via salvage pathway; L-methionine from S-methyl-5-thio-alpha-D-ribose 1-phosphate: step 2/6. In terms of biological role, catalyzes the dehydration of methylthioribulose-1-phosphate (MTRu-1-P) into 2,3-diketo-5-methylthiopentyl-1-phosphate (DK-MTP-1-P). The protein is Methylthioribulose-1-phosphate dehydratase of Schizosaccharomyces japonicus (strain yFS275 / FY16936) (Fission yeast).